The chain runs to 338 residues: tRNA N6-adenosine threonylcarbamoyltransferase (338 aa).

Fe cation contacts are provided by His-114 and His-118. Residues 136-140 (LVSGG), Asp-169, Gly-182, Asp-186, and Asn-275 each bind substrate. Asp-301 contacts Fe cation.

This sequence belongs to the KAE1 / TsaD family. Fe(2+) serves as cofactor.

The protein localises to the cytoplasm. It carries out the reaction L-threonylcarbamoyladenylate + adenosine(37) in tRNA = N(6)-L-threonylcarbamoyladenosine(37) in tRNA + AMP + H(+). Functionally, required for the formation of a threonylcarbamoyl group on adenosine at position 37 (t(6)A37) in tRNAs that read codons beginning with adenine. Is involved in the transfer of the threonylcarbamoyl moiety of threonylcarbamoyl-AMP (TC-AMP) to the N6 group of A37, together with TsaE and TsaB. TsaD likely plays a direct catalytic role in this reaction. The chain is tRNA N6-adenosine threonylcarbamoyltransferase from Streptococcus equi subsp. equi (strain 4047).